The following is a 732-amino-acid chain: S-adenosyl-L-methionine-dependent tRNA 4-demethylwyosine synthase TYW1 (732 aa).

Residues 79–237 (VKIFYGSQTG…DFRAWKTKFI (159 aa)) enclose the Flavodoxin-like domain. FMN contacts are provided by residues 85 to 89 (SQTGT) and 176 to 208 (VFGL…HRVM). Residues 248–314 (RKKSCGGHCK…HQSLNSIVDV (67 aa)) form a disordered region. Basic and acidic residues predominate over residues 259–286 (GKCESHQHGSEEREEGSHEQDELHHRDT). A compositionally biased stretch (acidic residues) spans 287 to 301 (EEEEPFESSSEEEFG). The 245-residue stretch at 400-644 (YGIESHRCME…VDLIPEYEIA (245 aa)) folds into the Radical SAM core domain. [4Fe-4S] cluster contacts are provided by cysteine 416, cysteine 420, and cysteine 423.

This sequence belongs to the TYW1 family. It depends on [4Fe-4S] cluster as a cofactor.

The catalysed reaction is N(1)-methylguanosine(37) in tRNA(Phe) + pyruvate + S-adenosyl-L-methionine = 4-demethylwyosine(37) in tRNA(Phe) + 5'-deoxyadenosine + L-methionine + CO2 + H2O. It participates in tRNA modification; wybutosine-tRNA(Phe) biosynthesis. Its function is as follows. Probable component of the wybutosine biosynthesis pathway. Wybutosine is a hyper modified guanosine with a tricyclic base found at the 3'-position adjacent to the anticodon of eukaryotic phenylalanine tRNA. Catalyzes the condensation of N-methylguanine with 2 carbon atoms from pyruvate to form the tricyclic 4-demethylwyosine, an intermediate in wybutosine biosynthesis. This Homo sapiens (Human) protein is S-adenosyl-L-methionine-dependent tRNA 4-demethylwyosine synthase TYW1 (TYW1).